A 449-amino-acid chain; its full sequence is Heterogeneous nuclear ribonucleoprotein H (449 aa).

Met-1 is subject to N-acetylmethionine. Met-2 is subject to N-acetylmethionine; in Heterogeneous nuclear ribonucleoprotein H, N-terminally processed. An RRM 1 domain is found at 11–90 (FVVKVRGLPW…RYVEVFKSNN (80 aa)). Phosphoserine is present on Ser-23. A Glycyl lysine isopeptide (Lys-Gly) (interchain with G-Cter in SUMO2) cross-link involves residue Lys-35. Residues Ser-54 and Ser-63 each carry the phosphoserine modification. Glycyl lysine isopeptide (Lys-Gly) (interchain with G-Cter in SUMO2) cross-links involve residues Lys-87 and Lys-98. The 78-residue stretch at 111-188 (GFVRLRGLPF…RYIEIFKSSR (78 aa)) folds into the RRM 2 domain. Arg-233 carries the dimethylated arginine; alternate modification. An Omega-N-methylarginine; alternate modification is found at Arg-233. The stretch at 234–249 (GAYGGGYGGYDDYNGY) is one 1-1 repeat. The 2 X 16 AA Gly-rich approximate repeats stretch occupies residues 234 to 433 (GAYGGGYGGY…YGGQSSMSGY (200 aa)). Residue Tyr-246 is modified to Phosphotyrosine. One can recognise an RRM 3 domain in the interval 289 to 364 (HCVHMRGLPY…RYVELFLNST (76 aa)). Position 310 is a phosphoserine (Ser-310). Tandem repeats lie at residues 354–372 (HRYV…GGAY), 374–392 (HRYV…GGAY), and 418–433 (GGYG…MSGY). The segment at 354–392 (HRYVELFLNSTAGASGGAYEHRYVELFLNSTAGASGGAY) is 2 X 19 AA perfect repeats.

Part of a ternary complex containing FUBP2, PTBP1, PTBP2 and HNRNPH1. Identified in the spliceosome C complex. Interacts with IGF2BP1. Interacts with CUGBP1; the interaction is RNA-dependent. Interacts with MBNL1; the interaction in RNA-independent.

It localises to the nucleus. Its subcellular location is the nucleoplasm. Functionally, this protein is a component of the heterogeneous nuclear ribonucleoprotein (hnRNP) complexes which provide the substrate for the processing events that pre-mRNAs undergo before becoming functional, translatable mRNAs in the cytoplasm. Mediates pre-mRNA alternative splicing regulation. Inhibits, together with CUGBP1, insulin receptor (IR) pre-mRNA exon 11 inclusion in myoblast. Binds to the IR RNA. Binds poly(RG). The protein is Heterogeneous nuclear ribonucleoprotein H (Hnrnph1) of Rattus norvegicus (Rat).